A 215-amino-acid polypeptide reads, in one-letter code: Virulence protein YscR (215 aa).

Helical transmembrane passes span Leu10–Phe30, Ile53–Ala73, Ile156–Leu176, and Ile188–Ala208.

It belongs to the FliP/MopC/SpaP family.

The protein localises to the cell membrane. The chain is Virulence protein YscR (yscR) from Salmonella typhimurium (strain LT2 / SGSC1412 / ATCC 700720).